The sequence spans 227 residues: Urease accessory protein UreG (227 aa).

Residues 1 to 10 (MHLDHAHTHD) show a composition bias toward basic and acidic residues. The disordered stretch occupies residues 1–22 (MHLDHAHTHDGPSAVSADAHRP). 35 to 42 (GPVGSGKT) serves as a coordination point for GTP.

The protein belongs to the SIMIBI class G3E GTPase family. UreG subfamily. In terms of assembly, homodimer. UreD, UreF and UreG form a complex that acts as a GTP-hydrolysis-dependent molecular chaperone, activating the urease apoprotein by helping to assemble the nickel containing metallocenter of UreC. The UreE protein probably delivers the nickel.

It localises to the cytoplasm. Functionally, facilitates the functional incorporation of the urease nickel metallocenter. This process requires GTP hydrolysis, probably effectuated by UreG. The sequence is that of Urease accessory protein UreG from Streptomyces avermitilis (strain ATCC 31267 / DSM 46492 / JCM 5070 / NBRC 14893 / NCIMB 12804 / NRRL 8165 / MA-4680).